Consider the following 287-residue polypeptide: NAD kinase (287 aa).

D70 functions as the Proton acceptor in the catalytic mechanism. Residues 70–71, 144–145, R155, K172, D174, 185–190, and Q244 contribute to the NAD(+) site; these read DG, ND, and TAYSLS.

It belongs to the NAD kinase family. Requires a divalent metal cation as cofactor.

Its subcellular location is the cytoplasm. It catalyses the reaction NAD(+) + ATP = ADP + NADP(+) + H(+). Its function is as follows. Involved in the regulation of the intracellular balance of NAD and NADP, and is a key enzyme in the biosynthesis of NADP. Catalyzes specifically the phosphorylation on 2'-hydroxyl of the adenosine moiety of NAD to yield NADP. This Solibacter usitatus (strain Ellin6076) protein is NAD kinase.